The primary structure comprises 401 residues: Multidrug resistance protein MdtA (401 aa).

The signal sequence occupies residues 1–20 (MNQNNKHRTLLFRAALAAIA).

Belongs to the membrane fusion protein (MFP) (TC 8.A.1) family. As to quaternary structure, part of a tripartite efflux system composed of MdtA, MdtB and MdtC.

The protein resides in the cell inner membrane. The polypeptide is Multidrug resistance protein MdtA (Photorhabdus laumondii subsp. laumondii (strain DSM 15139 / CIP 105565 / TT01) (Photorhabdus luminescens subsp. laumondii)).